A 1057-amino-acid polypeptide reads, in one-letter code: Nuclear RNAi defective-3 protein (1057 aa).

Disordered stretches follow at residues 1–89 (MDLL…GLSV) and 344–388 (LTNS…ERTV). Residues 17 to 30 (STAKKPATSASSTP) are compositionally biased toward low complexity. 2 stretches are compositionally biased toward basic and acidic residues: residues 67–81 (PKREHTDRTGPDPKR) and 356–388 (GGRERRDGGGNSRKYDDRRSPRDGEIDYDERTV). Residues 387–500 (TVSHYQRQFQ…YPMELMSILP (114 aa)) enclose the PAZ domain. The region spanning 677–1001 (GIIAEKRPDM…LAKRGHNNYK (325 aa)) is the Piwi domain.

The protein resides in the cytoplasm. The protein localises to the nucleus. Transports small interfering RNAs (siRNAs) from the cytoplasm to the nucleus. Required for RNA interference (RNAi) in nuclei. Required for exogenous RNAi-induced H3K27 methylation. This is Nuclear RNAi defective-3 protein (nrde-3) from Caenorhabditis elegans.